The following is a 740-amino-acid chain: Ion-translocating oxidoreductase complex subunit C (740 aa).

4Fe-4S ferredoxin-type domains lie at 369-397 (GEPQEEQSCIRCSACADACPADLLPQQLY) and 407-436 (KATTHNIADCIECGACAWVCPSNIPLVQYF). Residues C377, C380, C383, C387, C416, C419, C422, and C426 each coordinate [4Fe-4S] cluster. Residues 602 to 718 (KLEQQQANAE…EEQVDPRKAA (117 aa)) are disordered.

It belongs to the 4Fe4S bacterial-type ferredoxin family. RnfC subfamily. In terms of assembly, the complex is composed of six subunits: RsxA, RsxB, RsxC, RsxD, RsxE and RsxG. [4Fe-4S] cluster is required as a cofactor.

Its subcellular location is the cell inner membrane. In terms of biological role, part of a membrane-bound complex that couples electron transfer with translocation of ions across the membrane. Required to maintain the reduced state of SoxR. The polypeptide is Ion-translocating oxidoreductase complex subunit C (Shigella sonnei (strain Ss046)).